The chain runs to 360 residues: Phospho-N-acetylmuramoyl-pentapeptide-transferase (360 aa).

Helical transmembrane passes span 19 to 39 (LTYLTSRIILGALTALLLSIF), 73 to 93 (TMGGALIIFSITVSMLCWADL), 95 to 115 (SVYTWLALFVLLGFGAVGWTD), 136 to 156 (YLSLVALLTALWLYFLADTPI), 173 to 193 (GILFIPFVYLVLTGASNAVNL), 199 to 219 (GLAIMPVVLVSGGLCIFAYLS), 233 to 253 (IAGAGEMAIFCAAIAGAGLGF), 263 to 283 (VFMGDVGALSLGAALATVAVV), 288 to 308 (LAFAVMGGVFVAEALSVMIQV), and 338 to 358 (VTIRFWIITVVLVLVGLSTLK).

This sequence belongs to the glycosyltransferase 4 family. MraY subfamily. It depends on Mg(2+) as a cofactor.

The protein localises to the cell inner membrane. It carries out the reaction UDP-N-acetyl-alpha-D-muramoyl-L-alanyl-gamma-D-glutamyl-meso-2,6-diaminopimeloyl-D-alanyl-D-alanine + di-trans,octa-cis-undecaprenyl phosphate = di-trans,octa-cis-undecaprenyl diphospho-N-acetyl-alpha-D-muramoyl-L-alanyl-D-glutamyl-meso-2,6-diaminopimeloyl-D-alanyl-D-alanine + UMP. It participates in cell wall biogenesis; peptidoglycan biosynthesis. Its function is as follows. Catalyzes the initial step of the lipid cycle reactions in the biosynthesis of the cell wall peptidoglycan: transfers peptidoglycan precursor phospho-MurNAc-pentapeptide from UDP-MurNAc-pentapeptide onto the lipid carrier undecaprenyl phosphate, yielding undecaprenyl-pyrophosphoryl-MurNAc-pentapeptide, known as lipid I. The protein is Phospho-N-acetylmuramoyl-pentapeptide-transferase of Dichelobacter nodosus (strain VCS1703A).